Consider the following 150-residue polypeptide: Arginine repressor (150 aa).

The protein belongs to the ArgR family.

The protein resides in the cytoplasm. It participates in amino-acid biosynthesis; L-arginine biosynthesis [regulation]. Functionally, regulates arginine biosynthesis genes. This is Arginine repressor from Symbiobacterium thermophilum (strain DSM 24528 / JCM 14929 / IAM 14863 / T).